Consider the following 125-residue polypeptide: Large ribosomal subunit protein uL18 (125 aa).

N-acetylglycine is present on Gly2. 2 positions are modified to N6-acetyllysine: Lys5 and Lys48.

Belongs to the universal ribosomal protein uL18 family. As to quaternary structure, component of the large ribosomal subunit (LSU). Part of the 5S RNP complex, which is a LSU subcomplex composed of the 5S RNA, RPL5 and RPL11. Component of a hexameric 5S RNP precursor complex, composed of 5S RNA, RRS1, RPF2/BXDC1, RPL5, RPL11 and HEATR3; this complex acts as a precursor for ribosome assembly. Interacts with NVL in an ATP-dependent manner. Interacts with RRP1B. Interacts with IPO5, IPO7 and KPNB1; these interactions may be involved in RPL5 nuclear import for the assembly of ribosomal subunits. Interacts with RRP1B.

It is found in the cytoplasm. It localises to the nucleus. Its subcellular location is the nucleolus. Functionally, component of the ribosome, a large ribonucleoprotein complex responsible for the synthesis of proteins in the cell. The small ribosomal subunit (SSU) binds messenger RNAs (mRNAs) and translates the encoded message by selecting cognate aminoacyl-transfer RNA (tRNA) molecules. The large subunit (LSU) contains the ribosomal catalytic site termed the peptidyl transferase center (PTC), which catalyzes the formation of peptide bonds, thereby polymerizing the amino acids delivered by tRNAs into a polypeptide chain. The nascent polypeptides leave the ribosome through a tunnel in the LSU and interact with protein factors that function in enzymatic processing, targeting, and the membrane insertion of nascent chains at the exit of the ribosomal tunnel. As part of the 5S RNP/5S ribonucleoprotein particle it is an essential component of the LSU, required for its formation and the maturation of rRNAs. It also couples ribosome biogenesis to p53/TP53 activation. As part of the 5S RNP it accumulates in the nucleoplasm and inhibits MDM2, when ribosome biogenesis is perturbed, mediating the stabilization and the activation of TP53. The sequence is that of Large ribosomal subunit protein uL18 (RPL5) from Sus scrofa (Pig).